Consider the following 173-residue polypeptide: Bifunctional protein PyrR (173 aa).

Residues 93 to 105 (IILVDDVLYTGRT) carry the PRPP-binding motif.

The protein belongs to the purine/pyrimidine phosphoribosyltransferase family. PyrR subfamily. Homodimer and homohexamer; in equilibrium.

It catalyses the reaction UMP + diphosphate = 5-phospho-alpha-D-ribose 1-diphosphate + uracil. Functionally, regulates transcriptional attenuation of the pyrimidine nucleotide (pyr) operon by binding in a uridine-dependent manner to specific sites on pyr mRNA. This disrupts an antiterminator hairpin in the RNA and favors formation of a downstream transcription terminator, leading to a reduced expression of downstream genes. In terms of biological role, also displays a weak uracil phosphoribosyltransferase activity which is not physiologically significant. This chain is Bifunctional protein PyrR, found in Streptococcus equi subsp. zooepidemicus (strain MGCS10565).